Here is a 439-residue protein sequence, read N- to C-terminus: Tol-Pal system protein TolB (439 aa).

Positions 1–22 (MTKFPRWLAILVGLLFPLSALT) are cleaved as a signal peptide.

The protein belongs to the TolB family. In terms of assembly, the Tol-Pal system is composed of five core proteins: the inner membrane proteins TolA, TolQ and TolR, the periplasmic protein TolB and the outer membrane protein Pal. They form a network linking the inner and outer membranes and the peptidoglycan layer.

It is found in the periplasm. Part of the Tol-Pal system, which plays a role in outer membrane invagination during cell division and is important for maintaining outer membrane integrity. This chain is Tol-Pal system protein TolB, found in Xylella fastidiosa (strain M12).